Reading from the N-terminus, the 257-residue chain is 3-deoxy-manno-octulosonate cytidylyltransferase (257 aa).

The protein belongs to the KdsB family.

Its subcellular location is the cytoplasm. The enzyme catalyses 3-deoxy-alpha-D-manno-oct-2-ulosonate + CTP = CMP-3-deoxy-beta-D-manno-octulosonate + diphosphate. It participates in nucleotide-sugar biosynthesis; CMP-3-deoxy-D-manno-octulosonate biosynthesis; CMP-3-deoxy-D-manno-octulosonate from 3-deoxy-D-manno-octulosonate and CTP: step 1/1. Its pathway is bacterial outer membrane biogenesis; lipopolysaccharide biosynthesis. Activates KDO (a required 8-carbon sugar) for incorporation into bacterial lipopolysaccharide in Gram-negative bacteria. The protein is 3-deoxy-manno-octulosonate cytidylyltransferase of Albidiferax ferrireducens (strain ATCC BAA-621 / DSM 15236 / T118) (Rhodoferax ferrireducens).